We begin with the raw amino-acid sequence, 176 residues long: Adenylyl-sulfate kinase (176 aa).

An ATP-binding site is contributed by 12–19 (GLSGAGKT). The Phosphoserine intermediate role is filled by Ser86.

This sequence belongs to the APS kinase family.

It catalyses the reaction adenosine 5'-phosphosulfate + ATP = 3'-phosphoadenylyl sulfate + ADP + H(+). It participates in sulfur metabolism; hydrogen sulfide biosynthesis; sulfite from sulfate: step 2/3. Functionally, catalyzes the synthesis of activated sulfate. This chain is Adenylyl-sulfate kinase, found in Synechococcus sp. (strain JA-3-3Ab) (Cyanobacteria bacterium Yellowstone A-Prime).